Reading from the N-terminus, the 557-residue chain is CTP synthase (557 aa).

The interval 1 to 270 (MTKYVFVTGG…DAIICEELKL (270 aa)) is amidoligase domain. CTP is bound at residue serine 13. Serine 13 is a UTP binding site. ATP-binding positions include 14–19 (SLGKGI) and aspartate 71. Residues aspartate 71 and glutamate 144 each coordinate Mg(2+). Residues 151-153 (DIE), 191-196 (KTKPTQ), and lysine 227 contribute to the CTP site. Residues 191-196 (KTKPTQ) and lysine 227 contribute to the UTP site. The 253-residue stretch at 295 to 547 (TIGMVGKYVD…VEAALAHQQS (253 aa)) folds into the Glutamine amidotransferase type-1 domain. Glycine 356 provides a ligand contact to L-glutamine. The active-site Nucleophile; for glutamine hydrolysis is cysteine 383. L-glutamine contacts are provided by residues 384–387 (LGMQ), glutamate 407, and arginine 473. Catalysis depends on residues histidine 520 and glutamate 522.

It belongs to the CTP synthase family. In terms of assembly, homotetramer.

The catalysed reaction is UTP + L-glutamine + ATP + H2O = CTP + L-glutamate + ADP + phosphate + 2 H(+). It catalyses the reaction L-glutamine + H2O = L-glutamate + NH4(+). The enzyme catalyses UTP + NH4(+) + ATP = CTP + ADP + phosphate + 2 H(+). It functions in the pathway pyrimidine metabolism; CTP biosynthesis via de novo pathway; CTP from UDP: step 2/2. Its activity is regulated as follows. Allosterically activated by GTP, when glutamine is the substrate; GTP has no effect on the reaction when ammonia is the substrate. The allosteric effector GTP functions by stabilizing the protein conformation that binds the tetrahedral intermediate(s) formed during glutamine hydrolysis. Inhibited by the product CTP, via allosteric rather than competitive inhibition. Functionally, catalyzes the ATP-dependent amination of UTP to CTP with either L-glutamine or ammonia as the source of nitrogen. Regulates intracellular CTP levels through interactions with the four ribonucleotide triphosphates. The sequence is that of CTP synthase from Paraburkholderia xenovorans (strain LB400).